A 324-amino-acid polypeptide reads, in one-letter code: D-alanine--D-alanine ligase (324 aa).

The ATP-grasp domain maps to 120 to 322 (NNYLRGFGVE…LKEILTEIIE (203 aa)). 149–204 (IDKLGLPLIVKPNDGGSSFGVTKVTNITQIQLAIRNAFNEGEGVLIESFIPGTEIT) is a binding site for ATP. The Mg(2+) site is built by Asp276, Glu289, and Asn291.

The protein belongs to the D-alanine--D-alanine ligase family. Mg(2+) is required as a cofactor. Requires Mn(2+) as cofactor.

It localises to the cytoplasm. The enzyme catalyses 2 D-alanine + ATP = D-alanyl-D-alanine + ADP + phosphate + H(+). It participates in cell wall biogenesis; peptidoglycan biosynthesis. Functionally, cell wall formation. The sequence is that of D-alanine--D-alanine ligase from Azobacteroides pseudotrichonymphae genomovar. CFP2.